The primary structure comprises 372 residues: Putative F-box/kelch-repeat protein At3g22730 (372 aa).

Residues 1 to 50 (MMMSDLSLDLVEEILSRVPATSLKRLRSTCKLWNALFKNPGFTKKQFLKA) form the F-box domain. 3 Kelch repeats span residues 155–204 (ILRC…SFKG), 245–293 (ALSV…PIRG), and 324–372 (KVYI…IIKE).

The protein is Putative F-box/kelch-repeat protein At3g22730 of Arabidopsis thaliana (Mouse-ear cress).